Here is a 515-residue protein sequence, read N- to C-terminus: Iridoid oxidase (515 aa).

2 helical membrane passes run 8 to 28 (SLNPVTVAISAGFLLLLIIFV) and 180 to 200 (AVQLSRFLFLMAFNLVGNLML). C455 is a heme binding site.

It belongs to the cytochrome P450 family. In terms of tissue distribution, expressed in the leaf internal phloem-associated parenchyma (IPAP) inside the mesophyll.

The protein localises to the endoplasmic reticulum membrane. The enzyme catalyses (+)-cis-trans-nepetalactol + 3 reduced [NADPH--hemoprotein reductase] + 3 O2 = 7-deoxyloganetate + 3 oxidized [NADPH--hemoprotein reductase] + 4 H2O + 4 H(+). The protein operates within alkaloid biosynthesis. Functionally, component of the seco-iridoid and derivatives monoterpenoid indole alkaloids (MIAs, e.g. vincristine, quinine, and strychnine) biosynthesis pathway. Catalyzes the conversion of cis-trans-nepetalactol (iridodial) into 7-deoxyloganetic acid. Also converts iridotrial into 7-deoxyloganetic acid. This chain is Iridoid oxidase, found in Catharanthus roseus (Madagascar periwinkle).